The primary structure comprises 313 residues: Porphobilinogen deaminase (313 aa).

Cysteine 242 is subject to S-(dipyrrolylmethanemethyl)cysteine.

This sequence belongs to the HMBS family. In terms of assembly, monomer. The cofactor is dipyrromethane.

It carries out the reaction 4 porphobilinogen + H2O = hydroxymethylbilane + 4 NH4(+). It participates in porphyrin-containing compound metabolism; protoporphyrin-IX biosynthesis; coproporphyrinogen-III from 5-aminolevulinate: step 2/4. Its function is as follows. Tetrapolymerization of the monopyrrole PBG into the hydroxymethylbilane pre-uroporphyrinogen in several discrete steps. In Pseudomonas putida (strain W619), this protein is Porphobilinogen deaminase.